Reading from the N-terminus, the 65-residue chain is Metallothionein-like protein type 3 (65 aa).

The protein belongs to the metallothionein superfamily. Type 15 family.

Metallothioneins have a high content of cysteine residues that bind various heavy metals. This Musa acuminata (Banana) protein is Metallothionein-like protein type 3.